The chain runs to 266 residues: Imidazole glycerol phosphate synthase subunit HisF (266 aa).

Catalysis depends on residues aspartate 11 and aspartate 130.

Belongs to the HisA/HisF family. As to quaternary structure, heterodimer of HisH and HisF.

Its subcellular location is the cytoplasm. The enzyme catalyses 5-[(5-phospho-1-deoxy-D-ribulos-1-ylimino)methylamino]-1-(5-phospho-beta-D-ribosyl)imidazole-4-carboxamide + L-glutamine = D-erythro-1-(imidazol-4-yl)glycerol 3-phosphate + 5-amino-1-(5-phospho-beta-D-ribosyl)imidazole-4-carboxamide + L-glutamate + H(+). It participates in amino-acid biosynthesis; L-histidine biosynthesis; L-histidine from 5-phospho-alpha-D-ribose 1-diphosphate: step 5/9. In terms of biological role, IGPS catalyzes the conversion of PRFAR and glutamine to IGP, AICAR and glutamate. The HisF subunit catalyzes the cyclization activity that produces IGP and AICAR from PRFAR using the ammonia provided by the HisH subunit. This chain is Imidazole glycerol phosphate synthase subunit HisF, found in Verminephrobacter eiseniae (strain EF01-2).